Consider the following 1056-residue polypeptide: Isoleucine--tRNA ligase (1056 aa).

Residues 1–13 (MCDQGEVSSQNSS) show a composition bias toward polar residues. A disordered region spans residues 1-26 (MCDQGEVSSQNSSDYKEQRPTPRPNL). A 'HIGH' region motif is present at residues 63–73 (PFANGLPHFGH). The 'KMSKS' region motif lies at 632-636 (KASKS). Lys635 lines the ATP pocket.

Belongs to the class-I aminoacyl-tRNA synthetase family. IleS type 2 subfamily. As to quaternary structure, monomer. Zn(2+) serves as cofactor.

The protein resides in the cytoplasm. The catalysed reaction is tRNA(Ile) + L-isoleucine + ATP = L-isoleucyl-tRNA(Ile) + AMP + diphosphate. Catalyzes the attachment of isoleucine to tRNA(Ile). As IleRS can inadvertently accommodate and process structurally similar amino acids such as valine, to avoid such errors it has two additional distinct tRNA(Ile)-dependent editing activities. One activity is designated as 'pretransfer' editing and involves the hydrolysis of activated Val-AMP. The other activity is designated 'posttransfer' editing and involves deacylation of mischarged Val-tRNA(Ile). The chain is Isoleucine--tRNA ligase from Tropheryma whipplei (strain TW08/27) (Whipple's bacillus).